A 256-amino-acid polypeptide reads, in one-letter code: MSHPPKLRLGVNVDHIATLRNARGGRAPDPVRAALLAIEAGADGITAHLREDRRHIRDDDMARLKAQISRPLNFEMAATEEMVRIALATKPHACCLVPERREELTTEGGLDVVGQHNALAPAIARLSEAGIRVSLFIAADPAQIEMAARLRAPVIEIHTGGWCDAITDGHHDKADAEWQRIVAGARQAYAAGLEVHAGHGLDYATAEQIAALPEIRELNIGYFIMGEALFVGLAESVRTMRAAMDRGRDRATGATA.

Residue asparagine 12 participates in 3-amino-2-oxopropyl phosphate binding. 14–15 (DH) contributes to the 1-deoxy-D-xylulose 5-phosphate binding site. 3-amino-2-oxopropyl phosphate is bound at residue arginine 23. The active-site Proton acceptor is the histidine 48. 1-deoxy-D-xylulose 5-phosphate is bound by residues arginine 50 and histidine 55. Glutamate 75 (proton acceptor) is an active-site residue. A 1-deoxy-D-xylulose 5-phosphate-binding site is contributed by threonine 105. Histidine 199 (proton donor) is an active-site residue. Residues glycine 200 and 221 to 222 (GY) each bind 3-amino-2-oxopropyl phosphate.

It belongs to the PNP synthase family. As to quaternary structure, homooctamer; tetramer of dimers.

The protein resides in the cytoplasm. It carries out the reaction 3-amino-2-oxopropyl phosphate + 1-deoxy-D-xylulose 5-phosphate = pyridoxine 5'-phosphate + phosphate + 2 H2O + H(+). It functions in the pathway cofactor biosynthesis; pyridoxine 5'-phosphate biosynthesis; pyridoxine 5'-phosphate from D-erythrose 4-phosphate: step 5/5. Its function is as follows. Catalyzes the complicated ring closure reaction between the two acyclic compounds 1-deoxy-D-xylulose-5-phosphate (DXP) and 3-amino-2-oxopropyl phosphate (1-amino-acetone-3-phosphate or AAP) to form pyridoxine 5'-phosphate (PNP) and inorganic phosphate. The sequence is that of Pyridoxine 5'-phosphate synthase from Bradyrhizobium sp. (strain ORS 278).